The sequence spans 238 residues: Pyridoxine 5'-phosphate synthase (238 aa).

3-amino-2-oxopropyl phosphate contacts are provided by Asn-7 and Arg-18. The active-site Proton acceptor is His-43. 1-deoxy-D-xylulose 5-phosphate-binding residues include Arg-45 and His-50. Glu-70 serves as the catalytic Proton acceptor. A 1-deoxy-D-xylulose 5-phosphate-binding site is contributed by Thr-100. His-190 (proton donor) is an active-site residue. 3-amino-2-oxopropyl phosphate contacts are provided by residues Asp-191 and 213–214; that span reads GH.

It belongs to the PNP synthase family. In terms of assembly, homooctamer; tetramer of dimers.

The protein resides in the cytoplasm. It carries out the reaction 3-amino-2-oxopropyl phosphate + 1-deoxy-D-xylulose 5-phosphate = pyridoxine 5'-phosphate + phosphate + 2 H2O + H(+). Its pathway is cofactor biosynthesis; pyridoxine 5'-phosphate biosynthesis; pyridoxine 5'-phosphate from D-erythrose 4-phosphate: step 5/5. Functionally, catalyzes the complicated ring closure reaction between the two acyclic compounds 1-deoxy-D-xylulose-5-phosphate (DXP) and 3-amino-2-oxopropyl phosphate (1-amino-acetone-3-phosphate or AAP) to form pyridoxine 5'-phosphate (PNP) and inorganic phosphate. The chain is Pyridoxine 5'-phosphate synthase from Cytophaga hutchinsonii (strain ATCC 33406 / DSM 1761 / CIP 103989 / NBRC 15051 / NCIMB 9469 / D465).